The sequence spans 478 residues: Glycogen synthase (478 aa).

ADP-alpha-D-glucose is bound at residue lysine 15.

The protein belongs to the glycosyltransferase 1 family. Bacterial/plant glycogen synthase subfamily.

It carries out the reaction [(1-&gt;4)-alpha-D-glucosyl](n) + ADP-alpha-D-glucose = [(1-&gt;4)-alpha-D-glucosyl](n+1) + ADP + H(+). It participates in glycan biosynthesis; glycogen biosynthesis. Its function is as follows. Synthesizes alpha-1,4-glucan chains using ADP-glucose. The protein is Glycogen synthase of Clostridium botulinum (strain Alaska E43 / Type E3).